The sequence spans 366 residues: tRNA(Met) cytidine acetate ligase (366 aa).

ATP-binding positions include 7–20, glycine 96, asparagine 152, and arginine 175; that span reads IAEF…HQYL.

This sequence belongs to the TmcAL family.

The protein localises to the cytoplasm. The catalysed reaction is cytidine(34) in elongator tRNA(Met) + acetate + ATP = N(4)-acetylcytidine(34) in elongator tRNA(Met) + AMP + diphosphate. In terms of biological role, catalyzes the formation of N(4)-acetylcytidine (ac(4)C) at the wobble position of elongator tRNA(Met), using acetate and ATP as substrates. First activates an acetate ion to form acetyladenylate (Ac-AMP) and then transfers the acetyl group to tRNA to form ac(4)C34. This chain is tRNA(Met) cytidine acetate ligase, found in Streptococcus equi subsp. zooepidemicus (strain MGCS10565).